A 304-amino-acid polypeptide reads, in one-letter code: Granaticin polyketide synthase bifunctional cyclase/dehydratase (304 aa).

The protein operates within antifungal biosynthesis; monensin biosynthesis. Functionally, is needed for correct cyclization of the oligoketide leading to isochromanequinone formation. The protein is Granaticin polyketide synthase bifunctional cyclase/dehydratase of Streptomyces virginiae (Streptomyces cinnamonensis).